A 206-amino-acid polypeptide reads, in one-letter code: Small ribosomal subunit protein uS4 (206 aa).

In terms of domain architecture, S4 RNA-binding spans 96–156; sequence CRLDNVVYRM…EKSLGQLRIV (61 aa).

It belongs to the universal ribosomal protein uS4 family. As to quaternary structure, part of the 30S ribosomal subunit. Contacts protein S5. The interaction surface between S4 and S5 is involved in control of translational fidelity.

Functionally, one of the primary rRNA binding proteins, it binds directly to 16S rRNA where it nucleates assembly of the body of the 30S subunit. Its function is as follows. With S5 and S12 plays an important role in translational accuracy. The chain is Small ribosomal subunit protein uS4 from Pseudomonas putida (strain ATCC 47054 / DSM 6125 / CFBP 8728 / NCIMB 11950 / KT2440).